The sequence spans 357 residues: F-box only protein 25 (357 aa).

The segment at 1–83 (MPFLGQDWRS…DTAAHSFYRE (83 aa)) is interaction with beta-actin. One can recognise an F-box domain in the interval 224–271 (GLTLSDLPLHMLNNILYRFSDGWDIVTLGQVTPTLYMLSEDRRLWKRL).

Part of a SCF (SKP1-cullin-F-box) protein ligase complex consisting of FBXO25, SKP1, CUL1 and RBX1. Interacts directly with SKP1 and CUL1. Interacts (via C-terminus) with actin (via N-terminus).

The protein resides in the nucleus. The protein operates within protein modification; protein ubiquitination. Functionally, substrate-recognition component of the SCF (SKP1-CUL1-F-box protein)-type E3 ubiquitin ligase complex. May play a role in accumulation of expanded polyglutamine (polyQ) protein huntingtin (HTT). This Rattus norvegicus (Rat) protein is F-box only protein 25 (Fbxo25).